Consider the following 855-residue polypeptide: uncharacterized protein (855 aa).

The next 10 helical transmembrane spans lie at 24-44, 256-276, 318-338, 361-381, 404-424, 430-450, 487-507, 725-745, 780-800, and 821-841; these read PFQY…IVAI, AFTV…IFLI, IGTG…IGLV, LLKG…PPAI, LMPW…LMLW, LVVA…IAPP, IAIA…ISVG, ITIA…LSAL, MGGM…WILV, and FLRA…YPAW.

Belongs to the ABC-4 integral membrane protein family. The complex is probably composed of two ATP-binding proteins (Rv0986) and two transmembrane proteins (Rv0987).

The protein resides in the cell membrane. In terms of biological role, probably part of an ABC transporter complex involved in host cell binding either through secretion of an adherence factor or through maintaining the architecture and integrity of the mycobacterial cell envelope. Could be required for host endothelial-cell invasion and/or intracellular survival. This is an uncharacterized protein from Mycobacterium tuberculosis (strain ATCC 25618 / H37Rv).